Reading from the N-terminus, the 2774-residue chain is Teneurin-2 (2774 aa).

A Teneurin N-terminal domain is found at 1–375; that stretch reads MDVKDRRHRS…KPSKYCSWKC (375 aa). Residues 1 to 379 are Cytoplasmic-facing; that stretch reads MDVKDRRHRS…YCSWKCAALS (379 aa). Phosphoserine is present on residues S90 and S124. Residues 111–271 form a disordered region; sequence TGSDADSDTE…HHHSSANSLN (161 aa). Positions 141 to 155 are enriched in polar residues; that stretch reads SSGLSSRENSALTLT. T155 carries the post-translational modification Phosphothreonine. S157 carries the phosphoserine modification. Over residues 159-168 the composition is skewed to basic and acidic residues; sequence NENKSDDDNG. Positions 174-188 are enriched in low complexity; that stretch reads TSSSSLLPSAQLPSS. Over residues 202 to 211 the composition is skewed to polar residues; sequence DSNTSHQIMD. Residues 229–240 are compositionally biased toward low complexity; sequence SGPQQASSSGPP. A helical transmembrane segment spans residues 380–400; the sequence is AIAAALLLAILLAYFIAMHLL. Over 401 to 2774 the chain is Extracellular; the sequence is GLNWQLQPAD…FLRQNEMGKR (2374 aa). N-linked (GlcNAc...) asparagine glycosylation is found at N443 and N482. EGF-like domains are found at residues 575–603, 605–634, 636–668, 669–701, 702–735, 738–766, 769–797, and 808–841; these read DCPR…ADCA, AACP…AECD, PMNQ…EHCE, EVDC…NCEL, ARVQ…PDCS, VCSV…AACD, VCHP…EHCT, and DGCP…PGCN. 22 disulfides stabilise this stretch: C576–C586, C580–C591, C593–C602, C611–C622, C624–C633, C640–C651, C645–C656, C658–C667, C672–C683, C677–C688, C690–C699, C710–C723, C725–C734, C739–C749, C743–C754, C756–C765, C770–C780, C774–C785, C787–C796, C810–C820, C814–C829, and C831–C840. N925, N948, and N1267 each carry an N-linked (GlcNAc...) asparagine glycan. 5 NHL repeats span residues 1272–1316, 1342–1386, 1401–1452, 1474–1501, and 1530–1573; these read LELR…VKSL, ARCG…NGII, LSCD…IAGR, LESA…INRL, and CYSG…VSKN. A YD 1 repeat occupies 1583 to 1602; that stretch reads YEAASPGEQELYVFNADGIH. The N-linked (GlcNAc...) asparagine glycan is linked to N1616. YD repeat units follow at residues 1619 to 1639, 1682 to 1701, and 1702 to 1724; these read YSAD…LKIR, YDGN…WTTF, and YDYD…TSLH. 5 N-linked (GlcNAc...) asparagine glycosylation sites follow: N1712, N1749, N1773, N1807, and N1892. 18 YD repeats span residues 1895–1914, 1936–1954, 1955–1975, 1982–1999, 2000–2021, 2022–2039, 2042–2062, 2065–2085, 2093–2113, 2119–2136, 2137–2163, 2165–2178, 2179–2202, 2205–2225, 2226–2246, 2248–2268, 2280–2300, and 2302–2322; these read YFFN…ERTD, YLDK…YIFE, YDSS…HSMS, YIRN…VIFD, YSDD…VFYK, YGKL…TAVT, YDET…FSCT, YRKV…EGMI, YHDN…TPLP, YDEI…GVIY, YDIN…IKEV, YEMF…MTVQ, YDSM…TKYT, YDGD…WRYS, YDLN…LMPL, YDLR…DDDG, YNSK…SVQY, and YDGV…LQYF. N1993 carries an N-linked (GlcNAc...) asparagine glycan. N2197 carries an N-linked (GlcNAc...) asparagine glycan. The N-linked (GlcNAc...) asparagine glycan is linked to N2337. One copy of the YD 23 repeat lies at 2348–2389; sequence YDLQGHLFAMESSSGEEYYVASDNTGTPLAVFSINGLMIKQL. A glycan (N-linked (GlcNAc...) asparagine) is linked at N2648.

The protein belongs to the tenascin family. Teneurin subfamily. As to quaternary structure, homodimer; disulfide-linked. Heterodimer with either TENM1 or TENM3. May also form heterodimer with TENM4. Interacts with ADGRL1 isoform 2. Derives from the membrane form by proteolytic processing. In terms of processing, derives from the plasma membrane form by proteolytic cleavage and translocates to the nucleus. Homophilic binding of the C-terminal extracellular domain stimulates its proteolytic cleavage and release in the cytoplasmic. Is subjected to rapid degradation by the proteasome pathway. As to expression, expressed in the brain (at protein level).

The protein localises to the cell membrane. It localises to the presynaptic cell membrane. Its subcellular location is the postsynaptic cell membrane. It is found in the endoplasmic reticulum. The protein resides in the golgi apparatus. The protein localises to the synapse. It localises to the cell projection. Its subcellular location is the dendritic spine. It is found in the filopodium. The protein resides in the growth cone. The protein localises to the nucleus. It localises to the PML body. Its function is as follows. Involved in neural development, regulating the establishment of proper connectivity within the nervous system. Acts as a ligand of the ADGRL1 and ADGRL3 receptors that are expressed at the surface of adjacent cells. Promotes the formation of filopodia and enlarged growth cone in neuronal cells. Mediates axon guidance and homophilic and heterophilic cell-cell adhesion. May function as a cellular signal transducer. Induces gene transcription inhibition. The protein is Teneurin-2 (Tenm2) of Rattus norvegicus (Rat).